A 484-amino-acid chain; its full sequence is Replication factor C large subunit (484 aa).

46–53 lines the ATP pocket; the sequence is GPPGSGKT. 3 stretches are compositionally biased toward basic and acidic residues: residues 419 to 432, 442 to 451, and 459 to 478; these read VKTE…KTKE, RISEPPEPLK, and KSVE…KKQA. The tract at residues 419–484 is disordered; sequence VKTETPKKKE…KKQATLDSFF (66 aa).

Belongs to the activator 1 small subunits family. RfcL subfamily. In terms of assembly, heteromultimer composed of small subunits (RfcS) and large subunits (RfcL).

In terms of biological role, part of the RFC clamp loader complex which loads the PCNA sliding clamp onto DNA. The chain is Replication factor C large subunit from Methanococcus maripaludis (strain C5 / ATCC BAA-1333).